Consider the following 471-residue polypeptide: Putative multidrug resistance protein MdtD (471 aa).

Residues 1-11 lie on the Periplasmic side of the membrane; sequence MTDLPDSTRWR. Residues 12-32 traverse the membrane as a helical segment; the sequence is LWIVAFGFFMQSLDTTIVNTA. At 33-48 the chain is on the cytoplasmic side; it reads LPSMAQSLGESPLHMH. A helical transmembrane segment spans residues 49–69; the sequence is MVIVSYVLTVAVMLPASGWLA. Residues 70 to 76 lie on the Periplasmic side of the membrane; that stretch reads DKVGVRN. Residues 77–97 traverse the membrane as a helical segment; sequence IFFTAIVLFTLGSLFCALSGT. At 98–101 the chain is on the cytoplasmic side; it reads LNEL. A helical transmembrane segment spans residues 102 to 124; sequence LLARALQGVGGAMMVPVGRLTVM. The Periplasmic segment spans residues 125–137; that stretch reads KIVPREQYMAAMT. Residues 138-158 traverse the membrane as a helical segment; the sequence is FVTLPGQVGPLLGPALGGLLV. At 159 to 164 the chain is on the cytoplasmic side; it reads EYASWH. The helical transmembrane segment at 165 to 185 threads the bilayer; sequence WIFLINIPVGIIGAIATLMLM. Topologically, residues 186–196 are periplasmic; that stretch reads PNYTMQTRRFD. The chain crosses the membrane as a helical span at residues 197 to 217; it reads LSGFLLLAVGMAVLTLALDGS. Residues 218–224 lie on the Cytoplasmic side of the membrane; sequence KGTGLSP. Residues 225–245 traverse the membrane as a helical segment; that stretch reads LAIAGLVAVGVVALVLYLLHA. The Periplasmic segment spans residues 246 to 262; the sequence is QNNNRALFSLKLFRTRT. The chain crosses the membrane as a helical span at residues 263-283; it reads FSLGLAGSFAGRIGSGMLPFM. Residues 284–285 lie on the Cytoplasmic side of the membrane; sequence TP. A helical membrane pass occupies residues 286 to 306; sequence VFLQIGLGFSPFHAGLMMIPM. Residues 307-341 lie on the Periplasmic side of the membrane; that stretch reads VLGSMGMKRIVVQVVNRFGYRRVLVATTLGLSLVT. Residues 342–362 form a helical membrane-spanning segment; that stretch reads LLFMTTALLGWYYVLPFVLFL. Residues 363–395 lie on the Cytoplasmic side of the membrane; that stretch reads QGMVNSTRFSSMNTLTLKDLPDNLASSGNSLLS. A helical transmembrane segment spans residues 396–416; the sequence is MIMQLSMSIGVTIAGLLLGLF. Residues 417–430 are Periplasmic-facing; the sequence is GSQHVSVDSGTTQT. The helical transmembrane segment at 431-451 threads the bilayer; the sequence is VFMYTWLSMASIIALPAFIFA. Topologically, residues 452–471 are cytoplasmic; it reads RVPNDTHQNVAISRRKRSAQ.

The protein belongs to the major facilitator superfamily. TCR/Tet family.

The protein localises to the cell inner membrane. This chain is Putative multidrug resistance protein MdtD, found in Escherichia coli O6:K15:H31 (strain 536 / UPEC).